The chain runs to 69 residues: Amphipathic peptide StCT2 (69 aa).

An N-terminal signal peptide occupies residues 1 to 23 (MKTQFAVLIISMILMQMLVQTEA). An Isoleucine amide modification is found at isoleucine 37. Positions 41-69 (SLRNQDQFDNMFDSDLSDADLKLLDDLFD) are excised as a propeptide.

It belongs to the non-disulfide-bridged peptide (NDBP) superfamily. Short antimicrobial peptide (group 4) family. Expressed by the venom gland.

Its subcellular location is the secreted. It localises to the target cell membrane. Antimicrobial peptide that is rapidly bactericidal against Gram-positive bacteria. In Scorpiops tibetanus (Scorpion), this protein is Amphipathic peptide StCT2.